The primary structure comprises 527 residues: GMP synthase [glutamine-hydrolyzing] (527 aa).

The Glutamine amidotransferase type-1 domain occupies 11–209; that stretch reads RILILDFGSQ…VLNICGCENL (199 aa). Cys88 serves as the catalytic Nucleophile. Active-site residues include His183 and Glu185. The region spanning 210 to 402 is the GMPS ATP-PPase domain; the sequence is WTSANIIEDA…LGLPYNMLYR (193 aa). 237 to 243 provides a ligand contact to ATP; the sequence is SGGVDSS.

In terms of assembly, homodimer.

The enzyme catalyses XMP + L-glutamine + ATP + H2O = GMP + L-glutamate + AMP + diphosphate + 2 H(+). Its pathway is purine metabolism; GMP biosynthesis; GMP from XMP (L-Gln route): step 1/1. Its function is as follows. Catalyzes the synthesis of GMP from XMP. This chain is GMP synthase [glutamine-hydrolyzing], found in Photobacterium profundum (strain SS9).